Here is a 497-residue protein sequence, read N- to C-terminus: Glutathione hydrolase 6 (497 aa).

Residues 1–34 form a disordered region; the sequence is MDATTGPVHYHKLQLWEPGVESEEEEEEEEEEIA. Over 1–51 the chain is Cytoplasmic; the sequence is MDATTGPVHYHKLQLWEPGVESEEEEEEEEEEIAEPLVLSLRRLQNTPRNE. Residues 20–34 show a composition bias toward acidic residues; the sequence is VESEEEEEEEEEEIA. Residues 52–72 traverse the membrane as a helical; Signal-anchor for type II membrane protein segment; it reads VGGLPGAWARLLAGLLLLAVS. Residues 73 to 497 are Extracellular-facing; sequence SSLALRQLHS…PSGCCPFQGY (425 aa). N-linked (GlcNAc...) asparagine glycosylation is found at Asn-164, Asn-169, Asn-367, and Asn-378.

This sequence belongs to the gamma-glutamyltransferase family. As to quaternary structure, heterodimer composed of the light and heavy chains. The active site is located in the light chain. Post-translationally, cleaved by autocatalysis into a large and a small subunit and the autocatalytic cleavage is essential to the functional activation of the enzyme.

It is found in the membrane. It catalyses the reaction an N-terminal (5-L-glutamyl)-[peptide] + an alpha-amino acid = 5-L-glutamyl amino acid + an N-terminal L-alpha-aminoacyl-[peptide]. The enzyme catalyses glutathione + H2O = L-cysteinylglycine + L-glutamate. It carries out the reaction an S-substituted glutathione + H2O = an S-substituted L-cysteinylglycine + L-glutamate. The protein operates within sulfur metabolism; glutathione metabolism. Functionally, hydrolyzes and transfers gamma-glutamyl moieties from glutathione and other gamma-glutamyl compounds to acceptors. The protein is Glutathione hydrolase 6 of Mus musculus (Mouse).